Reading from the N-terminus, the 491-residue chain is MYRKSALELRNSVVSGESSATAIAEYFYNRIETEDSRIGAFLSLCKERAYEKAAIVDAKRERGEPLGKLAGVPIGIKDNIHVTGLRTTCASKMLENYIAPFDATVIKRIEAEDGIILGKLNMDEFAMGSTTQYSAFHPTKNPWDLSCVPGGSSGGSAAAVSARFCPMALGSDTGGSIRQPAAFCGVVGFKPSYGAVSRYGLVAFGSSLDQIGPLTTVVEDVALAMDVFAGKDKNDATTQEFFTGSFQDALSLEVPSLIGVPMGFLEGLRDDIKENFFASLNVLERQGSHIVDIDLDILHHAVSVYYIVASAEAATNLARFDGIRYGYRSLEAHSMEDVYTLSRVQGFGKEVMRRILLGNYVLSAERQSVYYKKGTAIRAKIIQAFQKAYEKCEVIAMPVCSCPAFADGEILDPISLYLQDIYTVAMNLAYLPAIAVPSGFSKEGLPLGLQIIGQQGRDQQVCQVGYSFQEHSGIKNICPEGCNKLFDGEVK.

Active-site charge relay system residues include Lys77 and Ser152. Residue Ser176 is the Acyl-ester intermediate of the active site.

Belongs to the amidase family. GatA subfamily. Heterotrimer of A, B and C subunits.

The catalysed reaction is L-glutamyl-tRNA(Gln) + L-glutamine + ATP + H2O = L-glutaminyl-tRNA(Gln) + L-glutamate + ADP + phosphate + H(+). Its function is as follows. Allows the formation of correctly charged Gln-tRNA(Gln) through the transamidation of misacylated Glu-tRNA(Gln) in organisms which lack glutaminyl-tRNA synthetase. The reaction takes place in the presence of glutamine and ATP through an activated gamma-phospho-Glu-tRNA(Gln). The sequence is that of Glutamyl-tRNA(Gln) amidotransferase subunit A from Chlamydia felis (strain Fe/C-56) (Chlamydophila felis).